A 468-amino-acid chain; its full sequence is Argininosuccinate lyase (468 aa).

This sequence belongs to the lyase 1 family. Argininosuccinate lyase subfamily.

It localises to the cytoplasm. The catalysed reaction is 2-(N(omega)-L-arginino)succinate = fumarate + L-arginine. The protein operates within amino-acid biosynthesis; L-arginine biosynthesis; L-arginine from L-ornithine and carbamoyl phosphate: step 3/3. This chain is Argininosuccinate lyase, found in Sphingopyxis alaskensis (strain DSM 13593 / LMG 18877 / RB2256) (Sphingomonas alaskensis).